Here is a 279-residue protein sequence, read N- to C-terminus: Tryptophan synthase alpha chain (279 aa).

Active-site proton acceptor residues include E50 and D61.

This sequence belongs to the TrpA family. Tetramer of two alpha and two beta chains.

It carries out the reaction (1S,2R)-1-C-(indol-3-yl)glycerol 3-phosphate + L-serine = D-glyceraldehyde 3-phosphate + L-tryptophan + H2O. The protein operates within amino-acid biosynthesis; L-tryptophan biosynthesis; L-tryptophan from chorismate: step 5/5. Its function is as follows. The alpha subunit is responsible for the aldol cleavage of indoleglycerol phosphate to indole and glyceraldehyde 3-phosphate. In Mesorhizobium japonicum (strain LMG 29417 / CECT 9101 / MAFF 303099) (Mesorhizobium loti (strain MAFF 303099)), this protein is Tryptophan synthase alpha chain.